The chain runs to 640 residues: Replication protein A 70 kDa DNA-binding subunit A (640 aa).

A DNA-binding region (OB) is located at residues 211–293 (AIKARVTAKG…NHLKNEWEIF (83 aa)). A C4-type zinc finger spans residues 503 to 529 (CPLMIGDKQCNKKVTRSGTNRWLCDRC).

Belongs to the replication factor A protein 1 family. In terms of assembly, heterotrimer of RPA1, RPA2 and RPA3 (canonical replication protein A complex). Interacts with RPA2A. In terms of tissue distribution, expressed in roots, leaves, stalks and flower buds.

The protein localises to the nucleus. Functionally, component of the replication protein A complex (RPA) required for DNA recombination, repair and replication. The activity of RPA is mediated by single-stranded DNA binding and protein interactions. Plays an essential role at later stages of meiotic recombination events required for the formation of class I crossovers. Is essential for normal progression through meiosis in pollen mother cells. Is involved in repair of double-strand DNA breaks (DSBs) induced by genotoxic stresses, but does not seem to be required for the repair of meiotic DSBs. The protein is Replication protein A 70 kDa DNA-binding subunit A (RPA1A) of Arabidopsis thaliana (Mouse-ear cress).